The sequence spans 397 residues: MKKLLKSVLVFAALSSASSLQALPVGNPAEPSLMIDGILWEGFGGDPCDPCTTWCDAISMRVGYYGDFVFDRVLKTDVNKEFQMGAEPTTSDTAGLSNDPTTNVARPNPAYGKHMQDAEMFTNAAYMALNIWDRFDVFCTLGATTGYLKGNSASFNLVGLFGTKTQSTNFNTAKLVPNTALNQAVVELYTDTTFAWSVGARAALWECGCATLGASFQYAQSKPKVEELNVLCDASEFTINKPKGYVGAEFPLDITAGTEAATGTKDASIDYHEWQASLALSYRLNMFTPYIGVKWSRVSFDADTIRIAQPKLAEAVLDVTTLNPTIAGKGSVVASGSENELADTMQIVSLQLNKMKSRKSCGIAVGTTIVDADKYAVTVETRLIDERAAHVNAQFRF.

The N-terminal stretch at 1-22 is a signal peptide; sequence MKKLLKSVLVFAALSSASSLQA.

It belongs to the chlamydial porin (CP) (TC 1.B.2) family. Part of a disulfide cross-linked outer membrane complex (COMC) composed of the major outer membrane porin (MOMP), the small cysteine-rich protein (OmcA) and the large cysteine-rich periplasmic protein (OmcB).

It is found in the cell outer membrane. In terms of biological role, in elementary bodies (EBs, the infectious stage, which is able to survive outside the host cell) provides the structural integrity of the outer envelope through disulfide cross-links with the small cysteine-rich protein and the large cysteine-rich periplasmic protein. It has been described in publications as the Sarkosyl-insoluble COMC (Chlamydia outer membrane complex), and serves as the functional equivalent of peptidoglycan. Its function is as follows. Permits diffusion of specific solutes through the outer membrane. The chain is Major outer membrane porin, serovar L3 (ompA) from Chlamydia trachomatis.